Here is a 444-residue protein sequence, read N- to C-terminus: N-succinylarginine dihydrolase (444 aa).

Substrate-binding positions include 19-28 (SGLSVGNIAS), Asn110, and 137-138 (HR). Residue Glu174 is part of the active site. Arg214 is a substrate binding site. The active site involves His250. Substrate contacts are provided by Asp252 and Asn362. Catalysis depends on Cys368, which acts as the Nucleophile.

This sequence belongs to the succinylarginine dihydrolase family. As to quaternary structure, homodimer.

The catalysed reaction is N(2)-succinyl-L-arginine + 2 H2O + 2 H(+) = N(2)-succinyl-L-ornithine + 2 NH4(+) + CO2. It functions in the pathway amino-acid degradation; L-arginine degradation via AST pathway; L-glutamate and succinate from L-arginine: step 2/5. Catalyzes the hydrolysis of N(2)-succinylarginine into N(2)-succinylornithine, ammonia and CO(2). This is N-succinylarginine dihydrolase from Aliivibrio salmonicida (strain LFI1238) (Vibrio salmonicida (strain LFI1238)).